A 685-amino-acid polypeptide reads, in one-letter code: Glycine--tRNA ligase beta subunit (685 aa).

This sequence belongs to the class-II aminoacyl-tRNA synthetase family. In terms of assembly, tetramer of two alpha and two beta subunits.

It localises to the cytoplasm. It catalyses the reaction tRNA(Gly) + glycine + ATP = glycyl-tRNA(Gly) + AMP + diphosphate. This is Glycine--tRNA ligase beta subunit from Leuconostoc mesenteroides subsp. mesenteroides (strain ATCC 8293 / DSM 20343 / BCRC 11652 / CCM 1803 / JCM 6124 / NCDO 523 / NBRC 100496 / NCIMB 8023 / NCTC 12954 / NRRL B-1118 / 37Y).